The primary structure comprises 786 residues: LPS-assembly protein LptD (786 aa).

The signal sequence occupies residues 1-24 (MKKRIPTLLATMIASALYSHQGLA). Intrachain disulfides connect Cys-31–Cys-726 and Cys-173–Cys-727.

The protein belongs to the LptD family. In terms of assembly, component of the lipopolysaccharide transport and assembly complex. Interacts with LptE and LptA. In terms of processing, contains two intramolecular disulfide bonds.

It localises to the cell outer membrane. Its function is as follows. Together with LptE, is involved in the assembly of lipopolysaccharide (LPS) at the surface of the outer membrane. This Salmonella typhimurium (strain LT2 / SGSC1412 / ATCC 700720) protein is LPS-assembly protein LptD.